Consider the following 317-residue polypeptide: tRNA(Met) cytidine acetate ligase (317 aa).

Residues 6–19 (IAEY…HIYQ), Gly-100, Asn-157, and Arg-182 each bind ATP.

The protein belongs to the TmcAL family.

It is found in the cytoplasm. The catalysed reaction is cytidine(34) in elongator tRNA(Met) + acetate + ATP = N(4)-acetylcytidine(34) in elongator tRNA(Met) + AMP + diphosphate. Catalyzes the formation of N(4)-acetylcytidine (ac(4)C) at the wobble position of elongator tRNA(Met), using acetate and ATP as substrates. First activates an acetate ion to form acetyladenylate (Ac-AMP) and then transfers the acetyl group to tRNA to form ac(4)C34. This is tRNA(Met) cytidine acetate ligase from Mesomycoplasma hyopneumoniae (strain 232) (Mycoplasma hyopneumoniae).